Here is a 585-residue protein sequence, read N- to C-terminus: Protein NRT1/ PTR FAMILY 8.3 (585 aa).

N-acetylglycine is present on Gly-2. The helical transmembrane segment at 91–111 threads the bilayer; that stretch reads WQGTCYLTPLIGAVLADAYWG. Residue Thr-115 is modified to Phosphothreonine. Transmembrane regions (helical) follow at residues 116 to 136, 154 to 174, 200 to 220, 228 to 248, 351 to 371, 387 to 407, 431 to 451, 472 to 492, 511 to 531, and 556 to 576; these read IACF…SASV, PAQY…TGGI, FFNW…SLLV, WGLG…SFFF, FPIW…STMF, LPPA…VPLY, MGIG…VEII, VLWQ…YFIG, ALAL…LTLV, and FFWL…FSAA.

This sequence belongs to the major facilitator superfamily. Proton-dependent oligopeptide transporter (POT/PTR) (TC 2.A.17) family. As to expression, highly expressed in young leaves, roots and germinating seeds, intermediately in stems, flowers and mature leaves and at low level in siliques.

It is found in the vacuole membrane. Inhibited by leucyl-ethionine. Peptide transporter. Mediates the transport of di- and tripeptides. High affinity, low capacity transporter. Can also transport histidine. This Arabidopsis thaliana (Mouse-ear cress) protein is Protein NRT1/ PTR FAMILY 8.3 (NPF8.3).